The chain runs to 194 residues: CASP-like protein 2C1 (194 aa).

The Cytoplasmic portion of the chain corresponds to 1 to 18; sequence MSSYMEAAAAARAAEAKT. The helical transmembrane segment at 19-39 threads the bilayer; sequence EGLLRGACALLAAAAALLVGL. Residues 40–59 are Extracellular-facing; that stretch reads NTQTETVLFIRKKATVKDVQ. A helical membrane pass occupies residues 60–80; it reads ALWVLAMAAAAAAGYHLLQLL. The Cytoplasmic segment spans residues 81-109; the sequence is RCFYLSRFADGKPCRHRRAIAWLCFLLDK. Residues 110-130 form a helical membrane-spanning segment; that stretch reads GCAYITFATTVAAAQACVVAL. At 131–151 the chain is on the extracellular side; the sequence is YGTHALQWTKLCNIYTRFCEQ. The helical transmembrane segment at 152-172 threads the bilayer; it reads VAGSLVCAMLAAVGTALLSVV. At 173–194 the chain is on the cytoplasmic side; sequence SARNLFRLYPSMLSPPPSSFVG.

The protein belongs to the Casparian strip membrane proteins (CASP) family. In terms of assembly, homodimer and heterodimers.

Its subcellular location is the cell membrane. The chain is CASP-like protein 2C1 from Oryza sativa subsp. japonica (Rice).